The chain runs to 1275 residues: Serine/threonine-protein kinase ULK4 (1275 aa).

One can recognise a Protein kinase domain in the interval 4-280 (FILYEEIGRG…WTRLLQHSFW (277 aa)). Disordered regions lie at residues 299-350 (SRNT…KSTL) and 364-392 (RPTP…TSPL). The segment covering 336–348 (FRLENPTEFRPKS) has biased composition (basic and acidic residues). Positions 364 to 373 (RPTPRTSTAV) are enriched in polar residues. HEAT repeat units lie at residues 842 to 880 (LKLC…ILSH), 926 to 964 (STVV…LLVN), 1025 to 1063 (LVEE…NLVA), 1151 to 1189 (NRPL…LYGG), and 1213 to 1253 (PKEQ…LAPG).

Belongs to the protein kinase superfamily. Ser/Thr protein kinase family. APG1/unc-51/ULK1 subfamily. Expressed in the brain, mainly in postmitotic neurons, including GABAergic neurons, but not in astrocytes (at protein level).

The enzyme catalyses L-seryl-[protein] + ATP = O-phospho-L-seryl-[protein] + ADP + H(+). It carries out the reaction L-threonyl-[protein] + ATP = O-phospho-L-threonyl-[protein] + ADP + H(+). May be involved in the remodeling of cytoskeletal components, such as alpha-tubulin, and in this way regulates neurite branching and elongation, as well as cell motility. The protein is Serine/threonine-protein kinase ULK4 (ULK4) of Homo sapiens (Human).